The following is a 251-amino-acid chain: Flap endonuclease Xni (251 aa).

Residue D104 coordinates Mg(2+). The 5'-3' exonuclease domain occupies 160–249 (VQPQQLPDYW…IDGNLQQLRL (90 aa)). Positions 171, 172, 180, 182, and 185 each coordinate K(+). The tract at residues 184–189 (GIGPKS) is interaction with DNA.

It belongs to the Xni family. Mg(2+) serves as cofactor. The cofactor is K(+).

Its function is as follows. Has flap endonuclease activity. During DNA replication, flap endonucleases cleave the 5'-overhanging flap structure that is generated by displacement synthesis when DNA polymerase encounters the 5'-end of a downstream Okazaki fragment. This is Flap endonuclease Xni from Escherichia coli O139:H28 (strain E24377A / ETEC).